A 254-amino-acid polypeptide reads, in one-letter code: Small ribosomal subunit protein uS2 (254 aa).

This sequence belongs to the universal ribosomal protein uS2 family.

This chain is Small ribosomal subunit protein uS2, found in Oceanobacillus iheyensis (strain DSM 14371 / CIP 107618 / JCM 11309 / KCTC 3954 / HTE831).